Consider the following 120-residue polypeptide: Small ribosomal subunit protein uS13 (120 aa).

Residues 94 to 120 (GLPLRGQRTRTNARTRKGPRKAIAGKK) are disordered.

Belongs to the universal ribosomal protein uS13 family. Part of the 30S ribosomal subunit. Forms a loose heterodimer with protein S19. Forms two bridges to the 50S subunit in the 70S ribosome.

Functionally, located at the top of the head of the 30S subunit, it contacts several helices of the 16S rRNA. In the 70S ribosome it contacts the 23S rRNA (bridge B1a) and protein L5 of the 50S subunit (bridge B1b), connecting the 2 subunits; these bridges are implicated in subunit movement. Contacts the tRNAs in the A and P-sites. The sequence is that of Small ribosomal subunit protein uS13 from Azoarcus sp. (strain BH72).